Reading from the N-terminus, the 438-residue chain is Probable chaperone protein ClpB 1 (438 aa).

Residues 1 to 94 are a coiled coil; that stretch reads MNTADTRQRL…NNRKIEARQA (94 aa). The interval 1 to 118 is linker; that stretch reads MNTADTRQRL…IADIVSRWTG (118 aa). Residues 128–345 form an NBD2 region; that stretch reads ERQKLLGIES…RIDEVILFTP (218 aa). 178–185 contributes to the ATP binding site; it reads GPTGVGKT. Residues 346 to 438 are C-terminal; sequence LTRENLREIV…ENDAIVMKKK (93 aa).

This sequence belongs to the ClpA/ClpB family. As to quaternary structure, homohexamer. The oligomerization is ATP-dependent.

It is found in the cytoplasm. In terms of biological role, part of a stress-induced multi-chaperone system, it is involved in the recovery of the cell from heat-induced damage, in cooperation with DnaK, DnaJ and GrpE. Acts before DnaK, in the processing of protein aggregates. Protein binding stimulates the ATPase activity; ATP hydrolysis unfolds the denatured protein aggregates, which probably helps expose new hydrophobic binding sites on the surface of ClpB-bound aggregates, contributing to the solubilization and refolding of denatured protein aggregates by DnaK. In Chlorobaculum tepidum (strain ATCC 49652 / DSM 12025 / NBRC 103806 / TLS) (Chlorobium tepidum), this protein is Probable chaperone protein ClpB 1 (clpB1).